We begin with the raw amino-acid sequence, 170 residues long: Urease accessory protein UreE (170 aa).

The protein belongs to the UreE family.

The protein localises to the cytoplasm. Its function is as follows. Involved in urease metallocenter assembly. Binds nickel. Probably functions as a nickel donor during metallocenter assembly. This chain is Urease accessory protein UreE, found in Helicobacter pylori (strain P12).